Here is a 226-residue protein sequence, read N- to C-terminus: V-type proton ATPase subunit E 1 (226 aa).

Residue A2 is modified to N-acetylalanine. The residue at position 56 (Y56) is a Phosphotyrosine.

Belongs to the V-ATPase E subunit family. In terms of assembly, V-ATPase is a heteromultimeric enzyme made up of two complexes: the ATP-hydrolytic V1 complex and the proton translocation V0 complex. The V1 complex consists of three catalytic AB heterodimers that form a heterohexamer, three peripheral stalks each consisting of EG heterodimers, one central rotor including subunits D and F, and the regulatory subunits C and H. The proton translocation complex V0 consists of the proton transport subunit a, a ring of proteolipid subunits c9c'', rotary subunit d, subunits e and f, and the accessory subunits ATP6AP1/Ac45 and ATP6AP2/PRR. Interacts with RABL2/RABL2A; binds preferentially to GTP-bound RABL2. Interacts with ALDOC. Interacts with RAB11B. As to expression, expressed within the midpiece of sperm tail (at protein level). Kidney; localizes to early distal nephron, encompassing thick ascending limbs and distal convoluted tubules (at protein level).

The protein localises to the apical cell membrane. It localises to the cytoplasmic vesicle. The protein resides in the secretory vesicle. Its subcellular location is the synaptic vesicle membrane. It is found in the clathrin-coated vesicle membrane. Functionally, subunit of the V1 complex of vacuolar(H+)-ATPase (V-ATPase), a multisubunit enzyme composed of a peripheral complex (V1) that hydrolyzes ATP and a membrane integral complex (V0) that translocates protons. V-ATPase is responsible for acidifying and maintaining the pH of intracellular compartments and in some cell types, is targeted to the plasma membrane, where it is responsible for acidifying the extracellular environment. This Mus musculus (Mouse) protein is V-type proton ATPase subunit E 1 (Atp6v1e1).